The primary structure comprises 519 residues: General transcription factor 3C polypeptide 5 (519 aa).

An N-acetylalanine modification is found at Ala-2. The interval 465–519 (ALFSSSAKADGGKEQLTYESGEDEEDEEEEEEEEEDFKPSDGSENEMETEILDYV) is disordered. Acidic residues-rich tracts occupy residues 484–500 (SGEDEEDEEEEEEEEED) and 507–519 (SENEMETEILDYV).

It belongs to the TFIIIC subunit 5 family. Part of the TFIIIC subcomplex TFIIIC2, consisting of six subunits, GTF3C1, GTF3C2, GTF3C3, GTF3C4, GTF3C5 and GTF3C6. Interacts with BRF1, GTF3C6 and TBP.

It is found in the nucleus. In terms of biological role, involved in RNA polymerase III-mediated transcription. Integral, tightly associated component of the DNA-binding TFIIIC2 subcomplex that directly binds tRNA and virus-associated RNA promoters. This Homo sapiens (Human) protein is General transcription factor 3C polypeptide 5 (GTF3C5).